The sequence spans 338 residues: Cytoskeleton protein RodZ (338 aa).

Residues 1–111 (MNTEASQDQT…LGKKHKKRDG (111 aa)) are Cytoplasmic-facing. The HTH cro/C1-type domain maps to 19 to 79 (LRQAREALGL…KLVHLPEDEL (61 aa)). Positions 30 to 49 (QQMVAERLCLKVSTIRDIEE) form a DNA-binding region, H-T-H motif. A helical; Signal-anchor for type II membrane protein membrane pass occupies residues 112 to 132 (WLMSFTWLIVLVVLGLTGAWW). The Periplasmic segment spans residues 133–338 (WQNHQAQQAE…RVARLTVGVE (206 aa)). Composition is skewed to polar residues over residues 151 to 163 (SAQLSQNGGQSVP) and 180 to 195 (PVANSQPSTPTENGTV). The tract at residues 151–253 (SAQLSQNGGQ…LPTADAGVTG (103 aa)) is disordered. The segment covering 196–209 (PATSSAAPADTANN) has biased composition (low complexity). A compositionally biased stretch (polar residues) spans 210-241 (GVNTTAPQGTTSAESAVVSPSQAPLPSVSTAQ).

This sequence belongs to the RodZ family.

The protein resides in the cell inner membrane. Cytoskeletal protein that is involved in cell-shape control through regulation of the length of the long axis. This Yersinia enterocolitica serotype O:8 / biotype 1B (strain NCTC 13174 / 8081) protein is Cytoskeleton protein RodZ.